The sequence spans 557 residues: Putative inactive polypeptide N-acetylgalactosaminyltransferase 11 (557 aa).

Topologically, residues 1 to 4 (MKSL) are cytoplasmic. Residues 5–27 (LFGTPCSCAIFILVYCIITLFIW) traverse the membrane as a helical; Signal-anchor for type II membrane protein segment. The Lumenal portion of the chain corresponds to 28–557 (FLYTDNLSNA…MRDICLSVNH (530 aa)). Asparagine 33 and asparagine 103 each carry an N-linked (GlcNAc...) asparagine glycan. Intrachain disulfides connect cysteine 99-cysteine 325, cysteine 316-cysteine 397, cysteine 437-cysteine 450, cysteine 472-cysteine 486, and cysteine 511-cysteine 526. The catalytic subdomain A stretch occupies residues 109–215 (TVTVSIVIAI…RGWLPPLLEP (107 aa)). Asparagine 220 carries N-linked (GlcNAc...) asparagine glycosylation. A catalytic subdomain B region spans residues 271-333 (PYPSSQLEGR…PCSRVGIIYK (63 aa)). N-linked (GlcNAc...) asparagine glycosylation occurs at asparagine 379. In terms of domain architecture, Ricin B-type lectin spans 456–557 (EDWTLTSRCQ…MRDICLSVNH (102 aa)).

It belongs to the glycosyltransferase 2 family. GalNAc-T subfamily.

The protein resides in the golgi apparatus membrane. Probable inactive glycosyltransferase. The chain is Putative inactive polypeptide N-acetylgalactosaminyltransferase 11 from Drosophila melanogaster (Fruit fly).